The chain runs to 456 residues: Probable tRNA(Ile)-lysidine synthase (456 aa).

Ser-30 to Ser-35 lines the ATP pocket.

Belongs to the tRNA(Ile)-lysidine synthase family.

The protein localises to the cytoplasm. It carries out the reaction cytidine(34) in tRNA(Ile2) + L-lysine + ATP = lysidine(34) in tRNA(Ile2) + AMP + diphosphate + H(+). In terms of biological role, ligates lysine onto the cytidine present at position 34 of the AUA codon-specific tRNA(Ile) that contains the anticodon CAU, in an ATP-dependent manner. Cytidine is converted to lysidine, thus changing the amino acid specificity of the tRNA from methionine to isoleucine. This Schizosaccharomyces pombe (strain 972 / ATCC 24843) (Fission yeast) protein is Probable tRNA(Ile)-lysidine synthase.